A 395-amino-acid chain; its full sequence is Elongation factor Tu (395 aa).

One can recognise a tr-type G domain in the interval 10–204; sequence KEHANIGTIG…AVDDFIPTPE (195 aa). Residues 19-26 form a G1 region; sequence GHVDHGKT. GTP is bound at residue 19-26; it reads GHVDHGKT. Mg(2+) is bound at residue threonine 26. A G2 region spans residues 60-64; it reads GITIN. The G3 stretch occupies residues 81-84; that stretch reads DCPG. Residues 81 to 85 and 136 to 139 each bind GTP; these read DCPGH and NKVD. The segment at 136-139 is G4; the sequence is NKVD. Positions 174–176 are G5; sequence SAL.

The protein belongs to the TRAFAC class translation factor GTPase superfamily. Classic translation factor GTPase family. EF-Tu/EF-1A subfamily. In terms of assembly, monomer.

It localises to the cytoplasm. The catalysed reaction is GTP + H2O = GDP + phosphate + H(+). GTP hydrolase that promotes the GTP-dependent binding of aminoacyl-tRNA to the A-site of ribosomes during protein biosynthesis. This is Elongation factor Tu from Staphylococcus saprophyticus subsp. saprophyticus (strain ATCC 15305 / DSM 20229 / NCIMB 8711 / NCTC 7292 / S-41).